Reading from the N-terminus, the 203-residue chain is GTP cyclohydrolase-2 (203 aa).

GTP is bound at residue Arg-49–Glu-53. Zn(2+) contacts are provided by Cys-54, Cys-65, and Cys-67. Residues Gln-70, Glu-92–Arg-94, and Thr-114 contribute to the GTP site. Catalysis depends on Asp-126, which acts as the Proton acceptor. Arg-128 functions as the Nucleophile in the catalytic mechanism. 2 residues coordinate GTP: Thr-149 and Lys-154.

Belongs to the GTP cyclohydrolase II family. Zn(2+) serves as cofactor.

The catalysed reaction is GTP + 4 H2O = 2,5-diamino-6-hydroxy-4-(5-phosphoribosylamino)-pyrimidine + formate + 2 phosphate + 3 H(+). Its pathway is cofactor biosynthesis; riboflavin biosynthesis; 5-amino-6-(D-ribitylamino)uracil from GTP: step 1/4. Catalyzes the conversion of GTP to 2,5-diamino-6-ribosylamino-4(3H)-pyrimidinone 5'-phosphate (DARP), formate and pyrophosphate. This chain is GTP cyclohydrolase-2, found in Shewanella sp. (strain MR-4).